A 1319-amino-acid polypeptide reads, in one-letter code: Cellulose synthase operon protein C (1319 aa).

Residues 1–46 (MNRRYVLSLSGALLASSCMTVLVAVPVARAQQASTAMTTAATSATA) form the signal peptide. 8 TPR repeats span residues 49–82 (RQIL…APNS), 84–116 (DVLE…APGS), 291–324 (AGLA…NSHD), 325–358 (ADSL…DPKT), 405–438 (TGAT…EPNN), 557–590 (NDAM…KQDL), 701–734 (MGIS…DPEA), and 736–768 (SPKL…NPQD). Over residues 841-855 (RAASGAGAAQEDALA) the composition is skewed to low complexity. The disordered stretch occupies residues 841-890 (RAASGAGAAQEDALAPPSTNPFRPRGYGHQTELGAPVTGGSYSAEAASPD). One copy of the TPR 9 repeat lies at 1059–1094 (RRSITNSVLSYGGLRDTNYNSALGRYARQVYGQALS).

The protein belongs to the AcsC/BcsC family.

It localises to the cell outer membrane. It functions in the pathway glycan metabolism; bacterial cellulose biosynthesis. Functionally, required for maximal bacterial cellulose synthesis. It may be involved in the formation of a membrane complex for extrusion of the cellulose product. The chain is Cellulose synthase operon protein C (bcsC) from Komagataeibacter xylinus (Gluconacetobacter xylinus).